Here is a 287-residue protein sequence, read N- to C-terminus: ATP synthase gamma chain (287 aa).

This sequence belongs to the ATPase gamma chain family. In terms of assembly, F-type ATPases have 2 components, CF(1) - the catalytic core - and CF(0) - the membrane proton channel. CF(1) has five subunits: alpha(3), beta(3), gamma(1), delta(1), epsilon(1). CF(0) has three main subunits: a, b and c.

It localises to the cell inner membrane. Its function is as follows. Produces ATP from ADP in the presence of a proton gradient across the membrane. The gamma chain is believed to be important in regulating ATPase activity and the flow of protons through the CF(0) complex. In Pectobacterium carotovorum subsp. carotovorum (strain PC1), this protein is ATP synthase gamma chain.